We begin with the raw amino-acid sequence, 589 residues long: Transcription factor MYC4 (589 aa).

The interval 99–150 (NTVLLGWGDGYYKGEEEKSRKKKSNPASAAEQEHRKRVIRELNSLISGGVGG) is JAZ-interaction domain. Disordered regions lie at residues 114–133 (EEKS…QEHR), 291–326 (AAPV…PNPK), 340–359 (IENG…VSNN), and 381–422 (ASVA…EAER). The span at 296–308 (NNGGNDSTSNSDS) shows a compositional bias: low complexity. Over residues 309-322 (QPISKLCNGSSVEN) the composition is skewed to polar residues. Residues 381–398 (ASVAKEAESNRVVVEPEK) show a composition bias toward basic and acidic residues. The segment covering 399–408 (KPRKRGRKPA) has biased composition (basic residues). The span at 409 to 422 (NGREEPLNHVEAER) shows a compositional bias: basic and acidic residues. A bHLH domain is found at 412-461 (EEPLNHVEAERQRREKLNQRFYSLRAVVPNVSKMDKASLLGDAISYISEL).

In terms of assembly, homo- and heterodimer. Interacts with MYB28, MYB29, MYB34, MYB51, MYB76, MYB122, MYC3, AFPH2/NINJA and the JAZ repressors TIFY10A/JAZ1, TIFY10B/JAZ2, TIFY6B/JAZ3, TIFY6A/JAZ4, TIFY11A/JAZ5, TIFY11B/JAZ6, TIFY5B/JAZ7, TIFY5A/JAZ8, TIFY7/JAZ9, TIFY9/JAZ10, TIFY3A/JAZ11 and TIFY3B/JAZ12. As to expression, expressed constitutively at low levels. Preferentially expressed in vascular tissues.

Its subcellular location is the nucleus. Transcription factor involved in jasmonic acid (JA) gene regulation. With MYC2 and MYC3, controls additively subsets of JA-dependent responses. Can form complexes with all known glucosinolate-related MYBs to regulate glucosinolate biosynthesis. Binds to the G-box (5'-CACGTG-3') of promoters. Activates multiple TIFY/JAZ promoters. The protein is Transcription factor MYC4 (MYC4) of Arabidopsis thaliana (Mouse-ear cress).